Consider the following 724-residue polypeptide: Semaphorin-2A (724 aa).

Positions Met-1 to Ala-25 are cleaved as a signal peptide. The 478-residue stretch at Gln-45–Leu-522 folds into the Sema domain. A glycan (N-linked (GlcNAc...) asparagine) is linked at Asn-95. Cys-118 and Cys-129 form a disulfide bridge. Residues Asn-163, Asn-190, Asn-229, and Asn-314 are each glycosylated (N-linked (GlcNAc...) asparagine). Cystine bridges form between Cys-291-Cys-399 and Cys-315-Cys-358. Asn-401 is a glycosylation site (N-linked (GlcNAc...) asparagine). 2 disulfides stabilise this stretch: Cys-525/Cys-541 and Cys-535/Cys-550. In terms of domain architecture, Ig-like C2-type spans Pro-552–Ala-663. Asn-563 carries N-linked (GlcNAc...) asparagine glycosylation. Cysteines 590 and 647 form a disulfide. Asn-658, Asn-670, and Asn-708 each carry an N-linked (GlcNAc...) asparagine glycan.

It belongs to the semaphorin family. Interacts with PlexB. In terms of tissue distribution, transiently expressed by a single large muscle during motoneuron outgrowth and synapse formation.

It localises to the secreted. Functionally, ligand for transmembrane receptor PlexB. Plays a role in growth cone guidance. Required for both proper adult behavior and survival. Can function as a selective target-derived signal that inhibits the formation of specific synaptic terminal arbors. Function in neurons is essential for adult survival, motor neuron survival, and is important for climbing behavior and activity. During embryogenesis, plays an important role in correct salivary gland positioning. In Drosophila melanogaster (Fruit fly), this protein is Semaphorin-2A.